The sequence spans 52 residues: ATP synthase F(1) complex subunit epsilon, mitochondrial (52 aa).

Residues lysine 21, lysine 32, and lysine 37 each carry the N6-acetyllysine; alternate modification. N6-succinyllysine; alternate occurs at positions 21, 32, and 37. At lysine 44 the chain carries N6-acetyllysine.

The protein belongs to the eukaryotic ATPase epsilon family. In terms of assembly, component of the ATP synthase complex composed at least of ATP5F1A/subunit alpha, ATP5F1B/subunit beta, ATP5MC1/subunit c (homooctomer), MT-ATP6/subunit a, MT-ATP8/subunit 8, ATP5ME/subunit e, ATP5MF/subunit f, ATP5MG/subunit g, ATP5MK/subunit k, ATP5MJ/subunit j, ATP5F1C/subunit gamma, ATP5F1D/subunit delta, ATP5F1E/subunit epsilon, ATP5PF/subunit F6, ATP5PB/subunit b, ATP5PD/subunit d, ATP5PO/subunit OSCP. ATP synthase complex consists of a soluble F(1) head domain (subunits alpha(3) and beta(3)) - the catalytic core - and a membrane F(0) domain - the membrane proton channel (subunits c, a, 8, e, f, g, k and j). These two domains are linked by a central stalk (subunits gamma, delta, and epsilon) rotating inside the F1 region and a stationary peripheral stalk (subunits F6, b, d, and OSCP).

The protein resides in the mitochondrion. It is found in the mitochondrion inner membrane. Subunit epsilon, of the mitochondrial membrane ATP synthase complex (F(1)F(0) ATP synthase or Complex V) that produces ATP from ADP in the presence of a proton gradient across the membrane which is generated by electron transport complexes of the respiratory chain. ATP synthase complex consist of a soluble F(1) head domain - the catalytic core - and a membrane F(1) domain - the membrane proton channel. These two domains are linked by a central stalk rotating inside the F(1) region and a stationary peripheral stalk. During catalysis, ATP synthesis in the catalytic domain of F(1) is coupled via a rotary mechanism of the central stalk subunits to proton translocation. In vivo, can only synthesize ATP although its ATP hydrolase activity can be activated artificially in vitro. May be essential for the assembly of F(1) and may play an important role in the incorporation of the hydrophobic subunit c into the F(1)-c oligomer rotor of the mitochondrial ATP synthase complex. The polypeptide is ATP synthase F(1) complex subunit epsilon, mitochondrial (Mus musculus (Mouse)).